The following is a 1541-amino-acid chain: Regulator of G-protein signaling loco (1541 aa).

A disordered region spans residues 1–66 (MHHHHPPLPI…RRKKRANYNY (66 aa)). Positions 11 to 36 (TGASGSTAVGTGAAAAEDASPAANSG) are enriched in low complexity. The segment covering 40 to 53 (ISTSTTPSGSNSQQ) has biased composition (polar residues). Residues 71–148 (TVEVRRGYNG…SIRMQIAENY (78 aa)) form the PDZ domain. Residues 182–222 (AKLHRLRNSPQKKLNPPEAVEPHKSKSSPDHPTLKPVLEDP) are disordered. Over residues 201-214 (VEPHKSKSSPDHPT) the composition is skewed to basic and acidic residues. Residues 247–423 (AALECRVIVG…VVNLVRSMYT (177 aa)) form the PID domain. Disordered stretches follow at residues 449–473 (GAVA…SNSD) and 708–761 (SEPD…ASMN). Polar residues-rich tracts occupy residues 457–473 (PQPS…SNSD) and 744–761 (EQQQ…ASMN). The RGS domain occupies 827–943 (SFERMLQDAA…IRSDLYKSCV (117 aa)). The disordered stretch occupies residues 978–1004 (SASNAEDRRRKSLLPWHRKTRSKSRDR). Residues 987–999 (RKSLLPWHRKTRS) show a composition bias toward basic residues. RBD domains follow at residues 1072–1142 (SLCR…IERR) and 1143–1213 (VAFK…IVMV). The interval 1258-1327 (DAAASEKSRP…SEEAATTQAV (70 aa)) is disordered. Residues 1273-1285 (MKSNEAPSETSSL) show a composition bias toward polar residues. Low complexity predominate over residues 1312 to 1325 (TSSSQQSEEAATTQ). Residues 1354–1376 (QDELLEGLKRAQLARLEDQRGTE) enclose the GoLoco domain. A disordered region spans residues 1410 to 1513 (KVPATPTEIP…ASKPGTFASK (104 aa)). A compositionally biased stretch (pro residues) spans 1460-1469 (APPPLPPKPK). The segment covering 1483 to 1499 (PTGNYCNKYSPSKQVPT) has biased composition (polar residues).

In terms of assembly, interacts (via GoLoco and RGS domains) with Galphai (via GDP- or GTP-bound forms). As to expression, expressed in surface and longitudinal glial cells, gut and heart (at protein level).

The protein localises to the cytoplasm. Its subcellular location is the cell membrane. It is found in the apical cell membrane. Functionally, acts as a regulator of G protein signaling (RGS). Modulates G protein alpha subunits nucleotide exchange and hydrolysis activities by functioning either as a GTPase-activating protein (GAP), thereby driving G protein alpha subunits into their inactive GDP-bound form, or as a GDP-dissociation inhibitor (GDI). Confers GDI and GAP activities on G(i) alpha subunit Galphai. Confers GAP activity on G(o)-alpha subunit Galphao and G(i) alpha subunit Galphai. Involved in the dorsal-ventral axis formation of the egg. Acts as a G-protein signaling for glial cell differentiation during embryogenesis; Galphai, Galphao and the G-protein coupled receptor, moody, are required in the surface glia to achieve effective insulation of the nerve cord. May be essential for nurse cell dumping during oogenesis. Required in neuroblast asymmetrical cell division. Plays a role in stress resistance and life span control. This chain is Regulator of G-protein signaling loco (loco), found in Drosophila melanogaster (Fruit fly).